Reading from the N-terminus, the 1043-residue chain is MDLSNHISLFDTKATALTSCTSIPLDGERDDSLGLAGAIYRRAQENPSAPAIEFDGETISYAQLHCRAALLAKQLTRKGVSREEAIGIMTGTGFEQIVAQAAVVYAGCTCCALDPTLPFAQLQYRLTNAGARICLVDQENSNRLKEFEVIAIRLEGITPSQVTAELAVPPRAMGTEHRTHLMHTSGSTGKPKTVQIQARALLHLSRDDRNVPIGYEDRTAQMAMVSFDISLFEIWVTLLRGATIVPVSRTLLSDVARLARTWRELRVTVMLVPASLLPMVVFAMPTVFSGMQVVYSGGEMPNLPAMKMALEQGPPNHLFNCYGPTECCIFSLVHEVTLKDTKNSVCPLTRLISDTRIEILDPSGQPVPDGDSGELFIGGDGVSPGYVNLADKTAERFVTTRQYPALPSGCNFYATGDLVRRTGTGEIYVHGRIDNQVKIRGYRVELEGVEAAIMDTGLVTTTAACKVQRGDDDLGAALVAFVIPKNPNTFTPDQLTDALKVQVAEYLVPQVEVCTEMPLNGHTKIDRERLVREFLEAATKRQLEMAGTQDASTTISRLRKIWHSVLPGCSRHIEDGDTFHALGGTSLQAAMLLIRMKREFSVELTAVMVYEQFTLAQMARYVDEGGAKYTIHAAHNRAYRQDVDIYKSLALQPLSGQPPQWDGPFEGRIFMTGATGFVGAFLLQTLLTLPEVKMVVCLVRAKNDEKARNRVMGVQTQYNLCQSSVDYSKLVAVAGDLDSPTLGLGGELFHQLGYWASCIFHSGAHVNYAQPYQSHRDANVLGTANILRFQATGRPKRLFYLSTLNIYGPTGLVDGYTRVGENDPITKFMDAVQYDNGYAQSKWVAEKMVIDAIRDNFPISIFRPGAIFCHSKTGTGNGTDFVARLMASCMRLKHYPTMPQQSKNFVPVDYLVDAILHLSRQQCSLGQAYNVVPTLHEQPENEMRDMFHMLEKACQTPMKEMPYDKWLELLKTLDDNNDPLRPLLPMLEEKVFENHCRWEMYSKMPIYGTENLTRDLRDVPGLAQFPVLDQPLLNRFLSELNLI.

The tract at residues 41–386 (RRAQENPSAP…IGGDGVSPGY (346 aa)) is adenylation (A) domain. Residues 549-626 (QDASTTISRL…QMARYVDEGG (78 aa)) form the Carrier domain. S586 bears the O-(pantetheine 4'-phosphoryl)serine mark. The segment at 671-914 (MTGATGFVGA…FVPVDYLVDA (244 aa)) is short-chain dehydrogenase/reductase (R) domain. The Thioester reductase (TE) domain maps to 672 to 915 (TGATGFVGAF…VPVDYLVDAI (244 aa)).

Belongs to the NRP synthetase family. Requires pantetheine 4'-phosphate as cofactor.

The enzyme catalyses L-valine + ATP + NADPH + H(+) = L-valinal + AMP + diphosphate + NADP(+). It carries out the reaction L-tryptophan + ATP + NADPH + H(+) = L-tryptophanal + AMP + diphosphate + NADP(+). It participates in alkaloid biosynthesis. Non-canonical nonribosomal peptide synthetase; part of the gene cluster that mediates the biosynthesis of campesine G, a dimeric indole piperazine alkaloid that shows good insecticidal activity Galleria mellonella. CpsA catalyzes the first steps of the pathway by producing L-tryptophanal and L-valinal from their respective amino-acids. These products condensate spontaneously to form trypyl-valyl pyrazine also known as didehydrocampesine A. The NmrA-like family domain-containing oxidoreductase cpsB is the next enzyme in cps pathway and reduces the unstable didehydrocampesine A to campesine A. The methyltransferase cpsF and the acetyltransferase cpsE both recognize N13 of piperazine ring to carry out methylation and acetylation of campesine A to produce campesine C and B, respectively. The cytochrome P450 monooxygenase cpsD then acts as a dimerase that catalyzes oxidative heterocoupling between campesine B and C to produce heterodimers with unexpected 6/5/6/6/6/6/5/6 eight-ring scaffold called campesine D. Finally,the cytochrome P450 monooxygenase cpsC is a regioselective dehydrogenase that catalyzes dehydrogenation reaction towards C2-N1 to produce campesine G. This is Non-canonical nonribosomal peptide synthetase cpsA from Aspergillus campestris (strain IBT 28561).